Reading from the N-terminus, the 136-residue chain is Large ribosomal subunit protein bL12 (136 aa).

This sequence belongs to the bacterial ribosomal protein bL12 family. Homodimer. Part of the ribosomal stalk of the 50S ribosomal subunit. Forms a multimeric L10(L12)X complex, where L10 forms an elongated spine to which 2 to 4 L12 dimers bind in a sequential fashion. Binds GTP-bound translation factors.

In terms of biological role, forms part of the ribosomal stalk which helps the ribosome interact with GTP-bound translation factors. Is thus essential for accurate translation. This Synechococcus sp. (strain JA-2-3B'a(2-13)) (Cyanobacteria bacterium Yellowstone B-Prime) protein is Large ribosomal subunit protein bL12.